Here is a 246-residue protein sequence, read N- to C-terminus: 4-hydroxy-tetrahydrodipicolinate reductase (246 aa).

Residues 8-13 (GAKGRM), 74-76 (GTT), and 101-104 (APNF) each bind NAD(+). His-131 (proton donor/acceptor) is an active-site residue. His-132 is a (S)-2,3,4,5-tetrahydrodipicolinate binding site. The active-site Proton donor is Lys-135. 141 to 142 (GT) provides a ligand contact to (S)-2,3,4,5-tetrahydrodipicolinate.

This sequence belongs to the DapB family.

It localises to the cytoplasm. The catalysed reaction is (S)-2,3,4,5-tetrahydrodipicolinate + NAD(+) + H2O = (2S,4S)-4-hydroxy-2,3,4,5-tetrahydrodipicolinate + NADH + H(+). It carries out the reaction (S)-2,3,4,5-tetrahydrodipicolinate + NADP(+) + H2O = (2S,4S)-4-hydroxy-2,3,4,5-tetrahydrodipicolinate + NADPH + H(+). Its pathway is amino-acid biosynthesis; L-lysine biosynthesis via DAP pathway; (S)-tetrahydrodipicolinate from L-aspartate: step 4/4. Its function is as follows. Catalyzes the conversion of 4-hydroxy-tetrahydrodipicolinate (HTPA) to tetrahydrodipicolinate. The chain is 4-hydroxy-tetrahydrodipicolinate reductase from Cutibacterium acnes (strain DSM 16379 / KPA171202) (Propionibacterium acnes).